The following is a 184-amino-acid chain: Elongation factor P (184 aa).

This sequence belongs to the elongation factor P family.

The protein resides in the cytoplasm. It participates in protein biosynthesis; polypeptide chain elongation. In terms of biological role, involved in peptide bond synthesis. Stimulates efficient translation and peptide-bond synthesis on native or reconstituted 70S ribosomes in vitro. Probably functions indirectly by altering the affinity of the ribosome for aminoacyl-tRNA, thus increasing their reactivity as acceptors for peptidyl transferase. This Polaromonas naphthalenivorans (strain CJ2) protein is Elongation factor P.